The following is a 94-amino-acid chain: Large ribosomal subunit protein bL25 (94 aa).

Belongs to the bacterial ribosomal protein bL25 family. As to quaternary structure, part of the 50S ribosomal subunit; part of the 5S rRNA/L5/L18/L25 subcomplex. Contacts the 5S rRNA. Binds to the 5S rRNA independently of L5 and L18.

In terms of biological role, this is one of the proteins that binds to the 5S RNA in the ribosome where it forms part of the central protuberance. In Klebsiella pneumoniae (strain 342), this protein is Large ribosomal subunit protein bL25.